Consider the following 138-residue polypeptide: Putative pre-16S rRNA nuclease (138 aa).

Belongs to the YqgF nuclease family.

It is found in the cytoplasm. Could be a nuclease involved in processing of the 5'-end of pre-16S rRNA. This chain is Putative pre-16S rRNA nuclease, found in Escherichia coli O7:K1 (strain IAI39 / ExPEC).